A 418-amino-acid chain; its full sequence is Tryptophan synthase beta chain (418 aa).

Polar residues predominate over residues 1–17 (MTSTLPNASTPDPSSLQ). Residues 1–23 (MTSTLPNASTPDPSSLQPAVRPG) are disordered. Lys-111 carries the post-translational modification N6-(pyridoxal phosphate)lysine.

This sequence belongs to the TrpB family. In terms of assembly, tetramer of two alpha and two beta chains. Requires pyridoxal 5'-phosphate as cofactor.

It carries out the reaction (1S,2R)-1-C-(indol-3-yl)glycerol 3-phosphate + L-serine = D-glyceraldehyde 3-phosphate + L-tryptophan + H2O. The protein operates within amino-acid biosynthesis; L-tryptophan biosynthesis; L-tryptophan from chorismate: step 5/5. Its function is as follows. The beta subunit is responsible for the synthesis of L-tryptophan from indole and L-serine. The protein is Tryptophan synthase beta chain of Synechococcus sp. (strain CC9605).